A 159-amino-acid chain; its full sequence is Ribosomal RNA large subunit methyltransferase H (159 aa).

Gly108 is a binding site for S-adenosyl-L-methionine.

It belongs to the RNA methyltransferase RlmH family. Homodimer.

It localises to the cytoplasm. The catalysed reaction is pseudouridine(1915) in 23S rRNA + S-adenosyl-L-methionine = N(3)-methylpseudouridine(1915) in 23S rRNA + S-adenosyl-L-homocysteine + H(+). Specifically methylates the pseudouridine at position 1915 (m3Psi1915) in 23S rRNA. The polypeptide is Ribosomal RNA large subunit methyltransferase H (Lactobacillus johnsonii (strain CNCM I-12250 / La1 / NCC 533)).